Here is a 161-residue protein sequence, read N- to C-terminus: Protein-export protein SecB (161 aa).

It belongs to the SecB family. As to quaternary structure, homotetramer, a dimer of dimers. One homotetramer interacts with 1 SecA dimer.

The protein resides in the cytoplasm. Its function is as follows. One of the proteins required for the normal export of preproteins out of the cell cytoplasm. It is a molecular chaperone that binds to a subset of precursor proteins, maintaining them in a translocation-competent state. It also specifically binds to its receptor SecA. This is Protein-export protein SecB from Methylocella silvestris (strain DSM 15510 / CIP 108128 / LMG 27833 / NCIMB 13906 / BL2).